Here is a 452-residue protein sequence, read N- to C-terminus: MARRYFGTDGIRGKVGEGPITPEFVLRLGYAAGKVLAGADRWAKSGTRPTVLIGKDTRVSGYMLEAALESGFSAAGVDVMLAGPMPTPGIAYLTRALRLAAGVVISASHNPYYDNGIKFFSADGNKLPDEVESQIEEQLDLPLACAASEQLGKARRLDDAAGRYIEFCKSTFPAAFDLHGLKLVVDCAHGAAYDVAPHVFHELGAEVIPIGVAPNGFNINDGVGATAPDALVRAVRANHADLGIALDGDADRLQVVDAAGRLYNGDELLYILVKDRVATDGKVDGAVGTLMTNMAVEVALQEAGVKFVRAAVGDRYVLEQLREHGWQLGAEGSGHILSLDRHSTGDGIVSALLVLAAMKRSEKTLADLLDGVTLFPQKLINVRMKPDADWKSSDAIRRAIAKAESALNGRGRVLIRASGTEPVLRVMVEAENAADALQYAESIAGAVKEATA.

S108 functions as the Phosphoserine intermediate in the catalytic mechanism. 4 residues coordinate Mg(2+): S108, D247, D249, and D251. Position 108 is a phosphoserine (S108).

It belongs to the phosphohexose mutase family. Requires Mg(2+) as cofactor. Activated by phosphorylation.

It carries out the reaction alpha-D-glucosamine 1-phosphate = D-glucosamine 6-phosphate. Its function is as follows. Catalyzes the conversion of glucosamine-6-phosphate to glucosamine-1-phosphate. This is Phosphoglucosamine mutase from Paraburkholderia phytofirmans (strain DSM 17436 / LMG 22146 / PsJN) (Burkholderia phytofirmans).